Here is a 439-residue protein sequence, read N- to C-terminus: Protein PHYTOCHROME KINASE SUBSTRATE 1 (439 aa).

Polar residues predominate over residues 1–14 (MVTLTPSSASTPKT). Disordered regions lie at residues 1 to 22 (MVTL…MKNN), 54 to 80 (KTLN…APED), and 100 to 139 (QGSS…SSWN). The segment covering 63 to 79 (KQEEFGDEKKMVKKAPE) has biased composition (basic and acidic residues). 2 stretches are compositionally biased toward polar residues: residues 100-109 (QGSSVLSLTN) and 118-139 (DSKQ…SSWN). Residues Ser238 and Ser244 each carry the phosphoserine modification. Disordered stretches follow at residues 259–311 (LPLP…PTCY) and 355–439 (TAKS…LYSQ). Basic and acidic residues predominate over residues 412 to 421 (TKPKSFETRR). Over residues 424-439 (SNSSISHTQSSLLYSQ) the composition is skewed to low complexity.

Belongs to the PKS family. In terms of assembly, interacts with PKS2, RPT3, PHOT1, PHOT2 and the C-termini of both phytochromes A (phyA) and B (phyB). Binds both spectral forms of phytochrome, Pr and Pfr. Phosphorylated on Ser and to a lower extent on Thr by phytochromes. Phosphorylation is stimulated twofold by red light. As to expression, expressed in young seedlings in both darkness and light. Moderate in leaves and very low in roots and flowers. Expressed in the elongation zone of the root and hypocotyl.

It localises to the cell membrane. May be responsible for light-regulated cytoplasmic sequestration of phytochromes or may be a negative regulator of phytochrome B signaling. Component of the network that modulates the very low-fluence response (VLFR) branch of phyA signaling. Acts positively in PHOT1 signaling. Regulates phytochrome-mediated photomorphogenesis and hypocotyl phototropism. Involved in the control of leaf flattening and leaf positioning. Promotes negative root phototropism and negatively regulates root gravitropism. May act by controlling auxin homeostasis. This chain is Protein PHYTOCHROME KINASE SUBSTRATE 1 (PKS1), found in Arabidopsis thaliana (Mouse-ear cress).